Consider the following 288-residue polypeptide: UTP--glucose-1-phosphate uridylyltransferase (288 aa).

It belongs to the UDPGP type 2 family.

It catalyses the reaction alpha-D-glucose 1-phosphate + UTP + H(+) = UDP-alpha-D-glucose + diphosphate. It functions in the pathway glycolipid metabolism; diglucosyl-diacylglycerol biosynthesis. Functionally, catalyzes the formation of UDP-glucose from glucose-1-phosphate and UTP. This is an intermediate step in the biosynthesis of diglucosyl-diacylglycerol (Glc2-DAG), i.e. the predominant glycolipid found in the S.aureus membrane, which is also used as a membrane anchor for lipoteichoic acid (LTA). The polypeptide is UTP--glucose-1-phosphate uridylyltransferase (gtaB) (Staphylococcus aureus (strain USA300)).